Consider the following 1406-residue polypeptide: DNA-directed RNA polymerase subunit beta' (1406 aa).

Positions 70, 72, 85, and 88 each coordinate Zn(2+). Residues aspartate 460, aspartate 462, and aspartate 464 each coordinate Mg(2+). Zn(2+) contacts are provided by cysteine 814, cysteine 889, cysteine 896, and cysteine 899.

It belongs to the RNA polymerase beta' chain family. As to quaternary structure, the RNAP catalytic core consists of 2 alpha, 1 beta, 1 beta' and 1 omega subunit. When a sigma factor is associated with the core the holoenzyme is formed, which can initiate transcription. Mg(2+) serves as cofactor. Zn(2+) is required as a cofactor.

The catalysed reaction is RNA(n) + a ribonucleoside 5'-triphosphate = RNA(n+1) + diphosphate. Functionally, DNA-dependent RNA polymerase catalyzes the transcription of DNA into RNA using the four ribonucleoside triphosphates as substrates. This Psychromonas ingrahamii (strain DSM 17664 / CCUG 51855 / 37) protein is DNA-directed RNA polymerase subunit beta'.